We begin with the raw amino-acid sequence, 1018 residues long: Collagen, type I, alpha 1a (1018 aa).

The segment covering 1–10 (QMSAGYDDKS) has biased composition (basic and acidic residues). The tract at residues 1–991 (QMSAGYDDKS…SGEYWLDPDQ (991 aa)) is disordered. The segment covering 13–30 (MPVPGPMGPMGPRGPPGS) has biased composition (pro residues). The segment covering 31-58 (PGASGPQGFTGPPGEPGEAGPSGAMGPR) has biased composition (low complexity). The span at 67–81 (NGEDGESGKPGRGGE) shows a compositional bias: basic and acidic residues. Low complexity predominate over residues 126–136 (PRGNDGAAGAA). Positions 138–151 (PPGPTGPAGPPGFP) are enriched in pro residues. A compositionally biased stretch (gly residues) spans 152-170 (GGPGAKGDAGAQGGRGPEG). Composition is skewed to low complexity over residues 171–214 (PAGA…AGAP) and 223–261 (SGPQGAAGAPGPKGNTGEVGAPGAKGEAGAKGEAGAPGV). Residues 284–296 (GARGGPGGRGFPG) show a composition bias toward gly residues. Low complexity-rich tracts occupy residues 370–385 (VGARGQPGVMGFPGPK), 424–442 (AGPAGERXXXGPAGAPGFQ), 452–510 (LPGE…QGMP), and 543–558 (RGLTGPLGLPGPAGAT). Gly residues predominate over residues 568 to 577 (GPVGPGGARG). 2 stretches are compositionally biased toward low complexity: residues 591 to 627 (AGFAGPPGADGQPGAKGEAGDNGAKGDAGPPGAAGPT) and 641 to 663 (PKGARGAAGPPGATGFPGAAGRV). Residues 665–677 (PPGPSGNPGPPGP) show a composition bias toward pro residues. Low complexity-rich tracts occupy residues 701–746 (EVGA…XXPG) and 775–795 (PGLAGAPGEPGREGSPGNEGS). Residues 819–829 (APGPPGAPGPV) are compositionally biased toward pro residues. Residues 843 to 862 (PAGPAGSAGPAGPRGPAGAP) show a composition bias toward low complexity. Basic and acidic residues predominate over residues 865 to 876 (RGDKGESGEAGE). The span at 889 to 925 (SGSSGEQGPAGAAGPAGPRGPAGSAGSPGKDGMSGLP) shows a compositional bias: low complexity. One can recognise a Fibrillar collagen NC1 domain in the interval 932–1018 (GPRGGFDLGF…CTSHTGTWGK (87 aa)). The span at 948-959 (KAPDPFRDRDLE) shows a compositional bias: basic and acidic residues. Residues 963 to 973 (TLKSLSQQLEQ) are compositionally biased toward polar residues.

It belongs to the fibrillar collagen family.

It localises to the secreted. The protein resides in the extracellular space. It is found in the extracellular matrix. The chain is Collagen, type I, alpha 1a from Epinephelus costae (Goldblotch grouper).